The sequence spans 319 residues: Lipoyl synthase (319 aa).

Residues 1–12 show a composition bias toward polar residues; sequence MVTIVDTLSNTP. The interval 1-32 is disordered; the sequence is MVTIVDTLSNTPLRPRHPEKANRPDSISPAKP. Residues cysteine 61, cysteine 66, cysteine 72, cysteine 87, cysteine 91, cysteine 94, and serine 300 each contribute to the [4Fe-4S] cluster site. In terms of domain architecture, Radical SAM core spans 73–289; that stretch reads WDKKHATFMI…ETVAYTKGFL (217 aa).

Belongs to the radical SAM superfamily. Lipoyl synthase family. It depends on [4Fe-4S] cluster as a cofactor.

The protein localises to the cytoplasm. The enzyme catalyses [[Fe-S] cluster scaffold protein carrying a second [4Fe-4S](2+) cluster] + N(6)-octanoyl-L-lysyl-[protein] + 2 oxidized [2Fe-2S]-[ferredoxin] + 2 S-adenosyl-L-methionine + 4 H(+) = [[Fe-S] cluster scaffold protein] + N(6)-[(R)-dihydrolipoyl]-L-lysyl-[protein] + 4 Fe(3+) + 2 hydrogen sulfide + 2 5'-deoxyadenosine + 2 L-methionine + 2 reduced [2Fe-2S]-[ferredoxin]. The protein operates within protein modification; protein lipoylation via endogenous pathway; protein N(6)-(lipoyl)lysine from octanoyl-[acyl-carrier-protein]: step 2/2. Its function is as follows. Catalyzes the radical-mediated insertion of two sulfur atoms into the C-6 and C-8 positions of the octanoyl moiety bound to the lipoyl domains of lipoate-dependent enzymes, thereby converting the octanoylated domains into lipoylated derivatives. The polypeptide is Lipoyl synthase (Bradyrhizobium sp. (strain BTAi1 / ATCC BAA-1182)).